The chain runs to 290 residues: tRNA (adenine(58)-N(1))-methyltransferase catalytic subunit TRMT61A (290 aa).

The residue at position 2 (serine 2) is an N-acetylserine. Substrate regions lie at residues leucine 20–histidine 22, glutamine 35–valine 42, glycine 64–tryptophan 65, glutamine 85–serine 89, and serine 110–valine 117. Residues leucine 87, serine 114–serine 116, glutamate 135, arginine 140, aspartate 163–valine 164, and aspartate 181 contribute to the S-adenosyl-L-methionine site. 2 substrate regions span residues leucine 180–proline 183 and serine 205–glutamine 212. Substrate is bound at residue threonine 279.

This sequence belongs to the class I-like SAM-binding methyltransferase superfamily. TRM61 family. In terms of assembly, heterotetramer; composed of two copies of TRMT6 and two copies of TRMT61A.

It is found in the nucleus. The enzyme catalyses adenosine(58) in tRNA + S-adenosyl-L-methionine = N(1)-methyladenosine(58) in tRNA + S-adenosyl-L-homocysteine + H(+). It carries out the reaction an adenosine in mRNA + S-adenosyl-L-methionine = an N(1)-methyladenosine in mRNA + S-adenosyl-L-homocysteine + H(+). In terms of biological role, catalytic subunit of tRNA (adenine-N(1)-)-methyltransferase, which catalyzes the formation of N(1)-methyladenine at position 58 (m1A58) in initiator methionyl-tRNA. Catalytic subunit of mRNA N(1)-methyltransferase complex, which mediates methylation of adenosine residues at the N(1) position of a small subset of mRNAs: N(1) methylation takes place in tRNA T-loop-like structures of mRNAs and is only present at low stoichiometries. This Rattus norvegicus (Rat) protein is tRNA (adenine(58)-N(1))-methyltransferase catalytic subunit TRMT61A (Trmt61a).